The following is a 48-amino-acid chain: Large ribosomal subunit protein bL33B (48 aa).

Belongs to the bacterial ribosomal protein bL33 family.

This chain is Large ribosomal subunit protein bL33B, found in Lactococcus lactis subsp. cremoris (strain MG1363).